The chain runs to 197 residues: Thymidine kinase (197 aa).

Residues 9–16 (SAMDAGKT) and 87–90 (DEIH) each bind ATP. Glu88 functions as the Proton acceptor in the catalytic mechanism. Zn(2+) contacts are provided by Cys145, Cys147, Cys187, and His190.

Belongs to the thymidine kinase family. In terms of assembly, homotetramer.

It is found in the cytoplasm. The enzyme catalyses thymidine + ATP = dTMP + ADP + H(+). The polypeptide is Thymidine kinase (Francisella tularensis subsp. tularensis (strain SCHU S4 / Schu 4)).